Here is an 877-residue protein sequence, read N- to C-terminus: Probable alpha/beta-glucosidase agdC (877 aa).

The signal sequence occupies residues 1 to 14; it reads MLGSLLLLAPLAGA. Asn-171, Asn-293, and Asn-373 each carry an N-linked (GlcNAc...) asparagine glycan. Asp-422 (nucleophile) is an active-site residue. Glu-425 is an active-site residue. The interval 432–476 is disordered; the sequence is DPCTDPERYSSENNLPPAPPPVRSSSPRPLPGFPADFQPSSASRS. Residues 447-463 show a composition bias toward pro residues; that stretch reads PPAPPPVRSSSPRPLPG. The N-linked (GlcNAc...) asparagine glycan is linked to Asn-508. Asp-573 acts as the Proton donor in catalysis. Asn-574, Asn-610, and Asn-744 each carry an N-linked (GlcNAc...) asparagine glycan.

It belongs to the glycosyl hydrolase 31 family.

Its subcellular location is the secreted. The enzyme catalyses Hydrolysis of terminal, non-reducing (1-&gt;4)-linked alpha-D-glucose residues with release of alpha-D-glucose.. It carries out the reaction Hydrolysis of terminal, non-reducing beta-D-glucosyl residues with release of beta-D-glucose.. Its function is as follows. Glucosidase involved in the degradation of cellulosic biomass. Has both alpha- and beta-glucosidase activity. This chain is Probable alpha/beta-glucosidase agdC (agdC), found in Aspergillus oryzae (strain ATCC 42149 / RIB 40) (Yellow koji mold).